A 78-amino-acid polypeptide reads, in one-letter code: MGGGNAQKSAMARAKNLEKAKAAGKGSQLEANKKAMSIQCKVCMQTFICTTSEVKCREHAEAKHPKADVVACFPHLKK.

The tract at residues Met1–Gln28 is disordered.

This is an uncharacterized protein from Arabidopsis thaliana (Mouse-ear cress).